The primary structure comprises 399 residues: CCA-adding enzyme (399 aa).

Residues Gly28 and Arg31 each coordinate ATP. CTP is bound by residues Gly28 and Arg31. Asp41 and Asp43 together coordinate Mg(2+). ATP is bound by residues Arg112, Asp155, Arg158, Arg161, and Arg164. 5 residues coordinate CTP: Arg112, Asp155, Arg158, Arg161, and Arg164.

Belongs to the tRNA nucleotidyltransferase/poly(A) polymerase family. Bacterial CCA-adding enzyme type 3 subfamily. In terms of assembly, homodimer. It depends on Mg(2+) as a cofactor.

It catalyses the reaction a tRNA precursor + 2 CTP + ATP = a tRNA with a 3' CCA end + 3 diphosphate. The catalysed reaction is a tRNA with a 3' CCA end + 2 CTP + ATP = a tRNA with a 3' CCACCA end + 3 diphosphate. Catalyzes the addition and repair of the essential 3'-terminal CCA sequence in tRNAs without using a nucleic acid template. Adds these three nucleotides in the order of C, C, and A to the tRNA nucleotide-73, using CTP and ATP as substrates and producing inorganic pyrophosphate. tRNA 3'-terminal CCA addition is required both for tRNA processing and repair. Also involved in tRNA surveillance by mediating tandem CCA addition to generate a CCACCA at the 3' terminus of unstable tRNAs. While stable tRNAs receive only 3'-terminal CCA, unstable tRNAs are marked with CCACCA and rapidly degraded. This chain is CCA-adding enzyme, found in Staphylococcus saprophyticus subsp. saprophyticus (strain ATCC 15305 / DSM 20229 / NCIMB 8711 / NCTC 7292 / S-41).